Reading from the N-terminus, the 509-residue chain is Maturase K (509 aa).

Belongs to the intron maturase 2 family. MatK subfamily.

Its subcellular location is the plastid. The protein localises to the chloroplast. Usually encoded in the trnK tRNA gene intron. Probably assists in splicing its own and other chloroplast group II introns. This chain is Maturase K, found in Amentotaxus argotaenia (Chinese flowering yew).